The sequence spans 96 residues: Large ribosomal subunit protein bL28 (96 aa).

Positions 1-22 (MSRSCELTGKGVQSGNNVSHAN) are enriched in polar residues. Residues 1-24 (MSRSCELTGKGVQSGNNVSHANNK) form a disordered region.

It belongs to the bacterial ribosomal protein bL28 family.

The polypeptide is Large ribosomal subunit protein bL28 (Rhizobium meliloti (strain 1021) (Ensifer meliloti)).